We begin with the raw amino-acid sequence, 268 residues long: Orotidine 5'-phosphate decarboxylase (268 aa).

Substrate-binding positions include D38, 60-62 (KTH), 92-101 (DRKFADIGNT), Y218, and R236. K94 acts as the Proton donor in catalysis.

It belongs to the OMP decarboxylase family.

The catalysed reaction is orotidine 5'-phosphate + H(+) = UMP + CO2. It participates in pyrimidine metabolism; UMP biosynthesis via de novo pathway; UMP from orotate: step 2/2. This is Orotidine 5'-phosphate decarboxylase (URA3) from Candida tropicalis (Yeast).